The primary structure comprises 385 residues: S-adenosylmethionine synthase (385 aa).

ATP is bound at residue H16. D18 is a Mg(2+) binding site. E44 lines the K(+) pocket. E57 and Q100 together coordinate L-methionine. The tract at residues 100–110 (QSPDINQGVDK) is flexible loop. ATP is bound by residues 165 to 167 (DAK), 231 to 232 (RF), D240, 246 to 247 (RK), A263, and K267. D240 is an L-methionine binding site. Residue K271 participates in L-methionine binding.

It belongs to the AdoMet synthase family. As to quaternary structure, homotetramer; dimer of dimers. Requires Mg(2+) as cofactor. The cofactor is K(+).

The protein localises to the cytoplasm. The catalysed reaction is L-methionine + ATP + H2O = S-adenosyl-L-methionine + phosphate + diphosphate. The protein operates within amino-acid biosynthesis; S-adenosyl-L-methionine biosynthesis; S-adenosyl-L-methionine from L-methionine: step 1/1. Catalyzes the formation of S-adenosylmethionine (AdoMet) from methionine and ATP. The overall synthetic reaction is composed of two sequential steps, AdoMet formation and the subsequent tripolyphosphate hydrolysis which occurs prior to release of AdoMet from the enzyme. This is S-adenosylmethionine synthase from Vibrio cholerae serotype O1 (strain ATCC 39315 / El Tor Inaba N16961).